The primary structure comprises 344 residues: tRNA N6-adenosine threonylcarbamoyltransferase (344 aa).

Residues H112 and H116 each coordinate Fe cation. Substrate contacts are provided by residues 134–138 (LASGG), D167, G180, and N280. D308 contributes to the Fe cation binding site.

It belongs to the KAE1 / TsaD family. The cofactor is Fe(2+).

It is found in the cytoplasm. The enzyme catalyses L-threonylcarbamoyladenylate + adenosine(37) in tRNA = N(6)-L-threonylcarbamoyladenosine(37) in tRNA + AMP + H(+). Required for the formation of a threonylcarbamoyl group on adenosine at position 37 (t(6)A37) in tRNAs that read codons beginning with adenine. Is involved in the transfer of the threonylcarbamoyl moiety of threonylcarbamoyl-AMP (TC-AMP) to the N6 group of A37, together with TsaE and TsaB. TsaD likely plays a direct catalytic role in this reaction. The sequence is that of tRNA N6-adenosine threonylcarbamoyltransferase from Rickettsia conorii (strain ATCC VR-613 / Malish 7).